The following is a 368-amino-acid chain: 3-dehydroquinate synthase (368 aa).

Belongs to the archaeal-type DHQ synthase family.

The enzyme catalyses 2-amino-2,3,7-trideoxy-D-lyxo-hept-6-ulosonate + NAD(+) + H2O = 3-dehydroquinate + NH4(+) + NADH + H(+). In terms of biological role, catalyzes the oxidative deamination and cyclization of 2-amino-3,7-dideoxy-D-threo-hept-6-ulosonic acid (ADH) to yield 3-dehydroquinate (DHQ), which is fed into the canonical shikimic pathway of aromatic amino acid biosynthesis. This is 3-dehydroquinate synthase from Methanobrevibacter smithii (strain ATCC 35061 / DSM 861 / OCM 144 / PS).